A 572-amino-acid chain; its full sequence is Chromatin assembly factor 1 subunit B (572 aa).

WD repeat units follow at residues 11–54, 64–103, 127–166, 169–208, 228–279, 301–347, and 351–392; these read HNKE…DGKA, RHTKAVNVVRFSPTGEILASGGDDAVILLWKMNDSKEPEQ, GHLEDVYDICWATDGNLMTSASVDNTVIIWDVSKGQKISI, EHKSYVQGVTWDPLGQYIATLSCDRVLRIYNTQKKRVAFN, FHDD…RPIA, RPVA…PFGY, and IHYH…IPLK. The residue at position 401 (Thr-401) is a Phosphothreonine. A disordered region spans residues 403–572; it reads DTAKKAKNQT…LAPDDSSKTV (170 aa). Residues 411–430 are compositionally biased toward polar residues; the sequence is QTHQGSSPGSRSVEGTPSNR. A Phosphoserine modification is found at Ser-416. Thr-426 carries the phosphothreonine modification. The span at 431–452 shows a compositional bias: low complexity; the sequence is TQDPSSPCTTPSPTTQSPAPSA. Ser-436 is modified (phosphoserine). Thr-440 is subject to Phosphothreonine. Phosphoserine is present on residues Ser-456 and Ser-465. Lys-501 is subject to N6-acetyllysine. Phosphothreonine is present on residues Thr-502 and Thr-510. The segment covering 511–529 has biased composition (polar residues); that stretch reads PLKTDTVPNPQPNSGTAPS. A compositionally biased stretch (basic and acidic residues) spans 546-559; that stretch reads PELKRPRLEEREGD.

The protein belongs to the WD repeat HIR1 family. In terms of assembly, subunit of the CAF-1 complex that contains RBBP4, CHAF1B and CHAF1A. CHAF1A binds directly to CHAF1B. Interacts with histones H3.1, H3.2 and H3.1t.

It is found in the nucleus. Its subcellular location is the cytoplasm. Functionally, acts as a component of the histone chaperone complex chromatin assembly factor 1 (CAF-1), which assembles histone octamers onto DNA during replication and repair. CAF-1 performs the first step of the nucleosome assembly process, bringing newly synthesized histones H3 and H4 to replicating DNA; histones H2A/H2B can bind to this chromatin precursor subsequent to DNA replication to complete the histone octamer. This is Chromatin assembly factor 1 subunit B from Mus musculus (Mouse).